Here is a 605-residue protein sequence, read N- to C-terminus: Glucose-6-phosphate isomerase (605 aa).

Glutamate 410 acts as the Proton donor in catalysis. Active-site residues include histidine 441 and lysine 569.

The protein belongs to the GPI family.

The protein resides in the cytoplasm. The catalysed reaction is alpha-D-glucose 6-phosphate = beta-D-fructose 6-phosphate. Its pathway is carbohydrate degradation; glycolysis; D-glyceraldehyde 3-phosphate and glycerone phosphate from D-glucose: step 2/4. This Leishmania mexicana protein is Glucose-6-phosphate isomerase (PGI).